The primary structure comprises 867 residues: Protein translocase subunit SecA (867 aa).

ATP-binding positions include glutamine 86, 104–108 (GEGKT), and aspartate 499. Positions 848, 850, 859, and 860 each coordinate Zn(2+).

The protein belongs to the SecA family. In terms of assembly, monomer and homodimer. Part of the essential Sec protein translocation apparatus which comprises SecA, SecYEG and auxiliary proteins SecDF-YajC and YidC. It depends on Zn(2+) as a cofactor.

The protein resides in the cell membrane. It localises to the cytoplasm. It carries out the reaction ATP + H2O + cellular proteinSide 1 = ADP + phosphate + cellular proteinSide 2.. In terms of biological role, part of the Sec protein translocase complex. Interacts with the SecYEG preprotein conducting channel. Has a central role in coupling the hydrolysis of ATP to the transfer of proteins into and across the cell membrane, serving both as a receptor for the preprotein-SecB complex and as an ATP-driven molecular motor driving the stepwise translocation of polypeptide chains across the membrane. The chain is Protein translocase subunit SecA from Wolbachia sp. subsp. Brugia malayi (strain TRS).